Consider the following 224-residue polypeptide: PKHD-type hydroxylase Shewmr4_3244 (224 aa).

Residues 78-176 (QFYPPLFNRY…RTAAFMWLQS (99 aa)) enclose the Fe2OG dioxygenase domain. Fe cation contacts are provided by histidine 96, aspartate 98, and histidine 157. Residue arginine 167 coordinates 2-oxoglutarate.

Fe(2+) serves as cofactor. Requires L-ascorbate as cofactor.

This chain is PKHD-type hydroxylase Shewmr4_3244, found in Shewanella sp. (strain MR-4).